Consider the following 267-residue polypeptide: Undecaprenyl-diphosphatase (267 aa).

The next 8 helical transmembrane spans lie at 1-21 (MSELQIVVLALIQGLTEFLPI), 39-59 (QGLAFDLILNIGTLSAVLIYF), 87-107 (WWILWSTIPAALIGFFGKSLV), 113-133 (SGYVIAVTTTVFGLLLWWADA), 144-164 (TGLKGALFIGFAQVLALIPGT), 189-209 (FLMSIPIIAMASGYDLLKFIL), 219-239 (LFLGAGISFVSAILCIHVFLI), and 244-264 (VGMMPFVIYRLLLGGFLFYIL).

Belongs to the UppP family.

The protein localises to the cell inner membrane. The catalysed reaction is di-trans,octa-cis-undecaprenyl diphosphate + H2O = di-trans,octa-cis-undecaprenyl phosphate + phosphate + H(+). In terms of biological role, catalyzes the dephosphorylation of undecaprenyl diphosphate (UPP). Confers resistance to bacitracin. In Psychromonas ingrahamii (strain DSM 17664 / CCUG 51855 / 37), this protein is Undecaprenyl-diphosphatase.